The primary structure comprises 296 residues: Cbb3-type cytochrome c oxidase subunit CcoP (296 aa).

Over 1–31 the chain is Cytoplasmic; the sequence is MAQNYKDELSGVETTGHEWDGLRELNNPLPK. The helical transmembrane segment at 32 to 52 threads the bilayer; it reads WWLYLFYVCIAWAMVYYVFYP. At 53–296 the chain is on the periplasmic side; it reads AWPLGKTYTK…VYVHNLGGGK (244 aa). Cytochrome c domains lie at 108-200 and 207-293; these read FAMA…LSLN and GKVA…HNLG. Heme c is bound by residues cysteine 121, cysteine 124, histidine 125, methionine 175, cysteine 220, cysteine 223, histidine 224, and methionine 270.

This sequence belongs to the CcoP / FixP family. Component of the cbb3-type cytochrome c oxidase at least composed of CcoN, CcoO, CcoQ and CcoP. Heme c is required as a cofactor.

It localises to the cell inner membrane. The protein operates within energy metabolism; oxidative phosphorylation. Its function is as follows. C-type cytochrome. Part of the cbb3-type cytochrome c oxidase complex. CcoP subunit is required for transferring electrons from donor cytochrome c via its heme groups to CcoO subunit. From there, electrons are shuttled to the catalytic binuclear center of CcoN subunit where oxygen reduction takes place. The complex also functions as a proton pump. This Azospirillum sp. (strain B510) protein is Cbb3-type cytochrome c oxidase subunit CcoP.